The chain runs to 339 residues: DNA-directed RNA polymerase subunit alpha (339 aa).

Residues 1 to 235 (MVIQKNWQEL…DQLQIFVNFE (235 aa)) form an alpha N-terminal domain (alpha-NTD) region. Residues 251-339 (FNPALLKKVD…DLAKRFEEHY (89 aa)) are alpha C-terminal domain (alpha-CTD).

This sequence belongs to the RNA polymerase alpha chain family. In terms of assembly, homodimer. The RNAP catalytic core consists of 2 alpha, 1 beta, 1 beta' and 1 omega subunit. When a sigma factor is associated with the core the holoenzyme is formed, which can initiate transcription.

The enzyme catalyses RNA(n) + a ribonucleoside 5'-triphosphate = RNA(n+1) + diphosphate. Functionally, DNA-dependent RNA polymerase catalyzes the transcription of DNA into RNA using the four ribonucleoside triphosphates as substrates. The sequence is that of DNA-directed RNA polymerase subunit alpha from Methylobacterium sp. (strain 4-46).